The chain runs to 546 residues: Probable bifunctional SAT/APS kinase (546 aa).

Positions 1–370 are sulfate adenylyltransferase; the sequence is MEKIKYLKSI…LAETYVPKHK (370 aa). The segment at 371–546 is adenylsulfate kinase; it reads QGFCVWLTGL…FLKKEGFIKD (176 aa). 379-386 is an ATP binding site; the sequence is GLPCAGKS. The Phosphoserine intermediate role is filled by S453.

The protein in the N-terminal section; belongs to the sulfate adenylyltransferase family. It in the C-terminal section; belongs to the APS kinase family.

It carries out the reaction sulfate + ATP + H(+) = adenosine 5'-phosphosulfate + diphosphate. The catalysed reaction is adenosine 5'-phosphosulfate + ATP = 3'-phosphoadenylyl sulfate + ADP + H(+). It participates in sulfur metabolism; hydrogen sulfide biosynthesis; sulfite from sulfate: step 1/3. Its pathway is sulfur metabolism; hydrogen sulfide biosynthesis; sulfite from sulfate: step 2/3. The protein is Probable bifunctional SAT/APS kinase (sat/cysC) of Aquifex aeolicus (strain VF5).